The chain runs to 494 residues: Fumarate hydratase, mitochondrial (494 aa).

The N-terminal 15 residues, 1 to 15 (MLRASATRFLSQAKN), are a transit peptide targeting the mitochondrion. Residues 128 to 130 (SGT), 159 to 162 (HPND), 169 to 171 (SSN), and T217 contribute to the substrate site. Residue H218 is the Proton donor/acceptor of the active site. S348 is a catalytic residue. Substrate is bound by residues S349 and 354-356 (KVN).

It belongs to the class-II fumarase/aspartase family. Fumarase subfamily. In terms of assembly, homotetramer.

The protein resides in the mitochondrion matrix. It localises to the cytoplasm. The protein localises to the nucleus. The enzyme catalyses (S)-malate = fumarate + H2O. Its pathway is carbohydrate metabolism; tricarboxylic acid cycle; (S)-malate from fumarate: step 1/1. In terms of biological role, catalyzes the reversible stereospecific interconversion of fumarate to L-malate. In mitochondrion, catalyzes the hydration of fumarate to L-malate in the tricarboxylic acid (TCA) cycle to facilitate a transition step in the production of energy in the form of NADH. In cytoplasm and nucleus, involved in DNA repair in response to DNA damage: following DNA double-strand breaks (DSBs), translocates from the cytosol to the nucleus and promotes DNA repair by catalyzing the dehydration of L-malate to fumarate. This Rhizopus oryzae (Mucormycosis agent) protein is Fumarate hydratase, mitochondrial.